The primary structure comprises 145 residues: Plastocyanin, chloroplastic (145 aa).

The transit peptide at 1 to 48 (MASLMRKAAVAPAKATRTTVKASASLQRVAQAAGVAVAGFSLALSANA) directs the protein to the chloroplast. Residues 49–145 (ANVKLGADSG…AGMVGKVIVQ (97 aa)) enclose the Plastocyanin-like domain. The Cu cation site is built by His85, Cys130, His133, and Met138.

This sequence belongs to the plastocyanin family. Requires Cu(2+) as cofactor.

It is found in the plastid. It localises to the chloroplast thylakoid membrane. Functionally, participates in electron transfer between P700 and the cytochrome b6-f complex in photosystem I. This is Plastocyanin, chloroplastic (PETE) from Tetradesmus obliquus (Green alga).